We begin with the raw amino-acid sequence, 414 residues long: Histidinol dehydrogenase (414 aa).

3 residues coordinate NAD(+): Y116, Q177, and N200. T223, Q245, and H248 together coordinate substrate. Positions 245 and 248 each coordinate Zn(2+). Residues E313 and H314 each act as proton acceptor in the active site. Substrate contacts are provided by H314, D347, E401, and H406. D347 is a binding site for Zn(2+). H406 is a Zn(2+) binding site.

Belongs to the histidinol dehydrogenase family. It depends on Zn(2+) as a cofactor.

It carries out the reaction L-histidinol + 2 NAD(+) + H2O = L-histidine + 2 NADH + 3 H(+). It functions in the pathway amino-acid biosynthesis; L-histidine biosynthesis; L-histidine from 5-phospho-alpha-D-ribose 1-diphosphate: step 9/9. In terms of biological role, catalyzes the sequential NAD-dependent oxidations of L-histidinol to L-histidinaldehyde and then to L-histidine. The chain is Histidinol dehydrogenase from Staphylococcus epidermidis (strain ATCC 12228 / FDA PCI 1200).